Reading from the N-terminus, the 566-residue chain is Arginine--tRNA ligase (566 aa).

The 'HIGH' region signature appears at 121–131 (PNIAKPMSMGH).

This sequence belongs to the class-I aminoacyl-tRNA synthetase family. As to quaternary structure, monomer.

It localises to the cytoplasm. It carries out the reaction tRNA(Arg) + L-arginine + ATP = L-arginyl-tRNA(Arg) + AMP + diphosphate. The protein is Arginine--tRNA ligase of Oenococcus oeni (strain ATCC BAA-331 / PSU-1).